A 218-amino-acid chain; its full sequence is Phosphoribosylformylglycinamidine synthase subunit PurQ (218 aa).

A Glutamine amidotransferase type-1 domain is found at 2 to 218 (SIAVLRFPGT…GARMLRGLAC (217 aa)). The active-site Nucleophile is the cysteine 86. Active-site residues include histidine 195 and glutamate 197.

In terms of assembly, part of the FGAM synthase complex composed of 1 PurL, 1 PurQ and 2 PurS subunits.

It is found in the cytoplasm. It catalyses the reaction N(2)-formyl-N(1)-(5-phospho-beta-D-ribosyl)glycinamide + L-glutamine + ATP + H2O = 2-formamido-N(1)-(5-O-phospho-beta-D-ribosyl)acetamidine + L-glutamate + ADP + phosphate + H(+). The enzyme catalyses L-glutamine + H2O = L-glutamate + NH4(+). The protein operates within purine metabolism; IMP biosynthesis via de novo pathway; 5-amino-1-(5-phospho-D-ribosyl)imidazole from N(2)-formyl-N(1)-(5-phospho-D-ribosyl)glycinamide: step 1/2. Part of the phosphoribosylformylglycinamidine synthase complex involved in the purines biosynthetic pathway. Catalyzes the ATP-dependent conversion of formylglycinamide ribonucleotide (FGAR) and glutamine to yield formylglycinamidine ribonucleotide (FGAM) and glutamate. The FGAM synthase complex is composed of three subunits. PurQ produces an ammonia molecule by converting glutamine to glutamate. PurL transfers the ammonia molecule to FGAR to form FGAM in an ATP-dependent manner. PurS interacts with PurQ and PurL and is thought to assist in the transfer of the ammonia molecule from PurQ to PurL. The polypeptide is Phosphoribosylformylglycinamidine synthase subunit PurQ (Wolinella succinogenes (strain ATCC 29543 / DSM 1740 / CCUG 13145 / JCM 31913 / LMG 7466 / NCTC 11488 / FDC 602W) (Vibrio succinogenes)).